The chain runs to 349 residues: Autophagy-related protein 3 (349 aa).

A flexible region region spans residues 95 to 173; the sequence is ALVNDGDDFK…IRDSGADSKN (79 aa). The active-site Glycyl thioester intermediate is Cys-244. A handle region region spans residues 248-325; sequence SVMKTLLDRA…DQEVAIRVDQ (78 aa). The ATG8 interaction motif (AIM) motif lies at 306–309; it reads WEEV.

The protein belongs to the ATG3 family. Monomer. Interacts with ATG8 through an intermediate thioester bond between Cys-244 and the C-terminal Gly of ATG8. Interacts with the C-terminal region of the E1-like ATG7 enzyme. Also interacts with the ATG12-ATG5 conjugate.

The protein resides in the cytoplasm. Functionally, E2 conjugating enzyme required for the cytoplasm to vacuole transport (Cvt) and autophagy. Required for selective autophagic degradation of the nucleus (nucleophagy) as well as for mitophagy which contributes to regulate mitochondrial quantity and quality by eliminating the mitochondria to a basal level to fulfill cellular energy requirements and preventing excess ROS production. Responsible for the E2-like covalent binding of phosphatidylethanolamine to the C-terminal Gly of ATG8. The ATG12-ATG5 conjugate plays a role of an E3 and promotes the transfer of ATG8 from ATG3 to phosphatidylethanolamine (PE). This step is required for the membrane association of ATG8. The formation of the ATG8-phosphatidylethanolamine conjugate is essential for autophagy and for the cytoplasm to vacuole transport (Cvt). The ATG8-PE conjugate mediates tethering between adjacent membranes and stimulates membrane hemifusion, leading to expansion of the autophagosomal membrane during autophagy. Autophagy is required for proper vegetative growth, asexual/sexual reproduction, and full virulence. Autophagy is particularly involved in the biosynthesis of deoxynivalenol (DON), an important virulence determinant. The protein is Autophagy-related protein 3 of Gibberella zeae (strain ATCC MYA-4620 / CBS 123657 / FGSC 9075 / NRRL 31084 / PH-1) (Wheat head blight fungus).